Reading from the N-terminus, the 1369-residue chain is MAAAAASGAGGVAVAGAGGAGPAGRLLPPPAAGPPAAPAAVPPAAVPARPTAPASRGSMAARIGYYEIDRTIGKGNFAVVKRATHLVTKAKVAIKIIDKSQLDEENLKKIFREVQIMKMLCHPHIIRLYQVMETERMIYLVTEYASGGEIFDHLVAHGRMAEKEARRKFKQIVTAVYFCHCRNIVHRDLKAENLLLDANLNIKIADFGFSNLFTPGQLLKTWCGSPPYAAPELFEGKEYDGPKVDIWSLGVVLYVLVCGALPFDGSTLQNLRARVLSGKFRIPFFMSTECEHLIRHMLVLDPNKRLSMEQICRHKWMKLGDADPNFDRLIAECQQLKEERQSDPLNDDVLLAMEDMGLDKERTLQSLRSDAYDHYSAIYSLLCDRHKKHKTLRPGALPSMPQAMTFQAPVNLQAEQTGTAMNLSVPQVQLINPENQIIEPDGAVNLDSDEGEEPSPEALVRYLSMRRHTVGVADPRTEVMEDLQKLLPGFPGVNPQGPFLQVAPNMNFTHNLLPMQSLQPTGQLEYKEQSLLQPPTLQLLNGMGPLGRRASDGGANIQLHAQQLLKRPRGPSPLVTMTPAVPAVTPVDEESSDGEPDQEAVQRYLANRSKRHTLAMTSPTAEIPPDLQRQLGQQSFRSRVWPPHLVPDQHRSTYKDSNTLHLPTERFSPVRRFSDGAASIQAFKAHLEKMGNSSSIKQLQQECEQLQKMYGGQVDERTLEKTQQQHMLYQQEQHHQILQQQIQDSICPPQPSPPLQVACENQPALLTHQLQRLRIQPSSPPPNHPSNHLFRQPSNSPPPVSSAMITSHGATSPSQFQGLPSHGAIFQQQPENCSPPPSVALTCLGLQQASQSQPVTIQLQEPVDMLSNMAGTAAGSAGRSIPISPSASQIQIQHRASLMAPFSYGHRPLSKQLSADSAEAHSLNMNRFSPANYDQAHLHPHLFSDQSRGSPSSYSPSTGVGFPPTQALKVPPLDQFPTFPPSAQQQPPHYTTSALQQALLSPTPPDYPRHQQVPHILQGLLSPRHSLTGHSDIRLPPAEFAQLIKRQQQHRQQQQQQQQQQEYHELFRHMNQGDAVSLAPSLGGQNMTEQQALSYQNADSYHRHHTSPQHILQIRAQDCISQGPSPTPTHGYAHQPPLMHSESMEEDCLCEGLKEGFPDKSSSTLTKGCHNSPLLLCTSGPGDPEPLLGTVSQARELGIHPYGHQPTATTFSRNKVPSRESVLGNCLERSSPGQAMELPDHNGLGYPVRPLVSEHLRSRTLQRHHTIQNSDDAYVQLDTLPGMSLVAGKALSSARMSDAVLSQSSLMGSQQFQDEEDEECGVSLGHEHPGLGDGSQHLNSSRYPATCVTDIMLSHKHPEVSFSMEQAGV.

The segment at 26-55 (LLPPPAAGPPAAPAAVPPAAVPARPTAPAS) is disordered. A compositionally biased stretch (pro residues) spans 27–45 (LPPPAAGPPAAPAAVPPAA). Over residues 46–55 (VPARPTAPAS) the composition is skewed to low complexity. One can recognise a Protein kinase domain in the interval 66 to 317 (YEIDRTIGKG…MEQICRHKWM (252 aa)). A Phosphothreonine modification is found at threonine 71. ATP is bound by residues 72 to 80 (IGKGNFAVV) and lysine 95. Residue aspartate 188 is the Proton acceptor of the active site. Threonine 221 is subject to Phosphothreonine. A UBA domain is found at 344–384 (PLNDDVLLAMEDMGLDKERTLQSLRSDAYDHYSAIYSLLCD). Threonine 469 bears the Phosphothreonine mark. A phosphoserine mark is found at serine 551, serine 591, serine 592, serine 674, and serine 695. The segment at 775 to 821 (IQPSSPPPNHPSNHLFRQPSNSPPPVSSAMITSHGATSPSQFQGLPS) is disordered. Residues 803-818 (AMITSHGATSPSQFQG) show a composition bias toward polar residues. Serine 914 is modified (phosphoserine). A disordered region spans residues 942–993 (LFSDQSRGSPSSYSPSTGVGFPPTQALKVPPLDQFPTFPPSAQQQPPHYTTS). Low complexity predominate over residues 944–957 (SDQSRGSPSSYSPS). The span at 981 to 993 (PSAQQQPPHYTTS) shows a compositional bias: polar residues. Position 1026 is a phosphoserine (serine 1026). Arginine 1034 is modified (omega-N-methylarginine). The disordered stretch occupies residues 1314–1338 (DEEDEECGVSLGHEHPGLGDGSQHL).

It belongs to the protein kinase superfamily. CAMK Ser/Thr protein kinase family. SNF1 subfamily. As to quaternary structure, binds to and is activated by YWHAZ when phosphorylated on Thr-221. Interacts with 14-3-3 proteins. Interacts with HDAC4; this interaction leads to HDAC4 retention in the cytoplasm. Interacts with DEPTOR, MLST8/GbetaL, RICTOR and RPTOR. The cofactor is Mg(2+). Post-translationally, phosphorylated at Thr-221 by STK11/LKB1 in complex with STE20-related adapter-alpha (STRADA) pseudo kinase and CAB39. Expressed in hypertrophic chondrocytes in the growth plate.

Its subcellular location is the cytoplasm. It carries out the reaction L-seryl-[protein] + ATP = O-phospho-L-seryl-[protein] + ADP + H(+). It catalyses the reaction L-threonyl-[protein] + ATP = O-phospho-L-threonyl-[protein] + ADP + H(+). Activated by phosphorylation on Thr-221. Functionally, positive regulator of mTOR signaling that functions by triggering the degradation of DEPTOR, an mTOR inhibitor. Required for chondrocyte hypertrophy during skeletogenesis. Negatively regulates cAMP signaling pathway possibly by acting on CRTC2/TORC2 and CRTC3/TORC3. Prevents HDAC4 translocation to the nucleus. The chain is Serine/threonine-protein kinase SIK3 (Sik3) from Mus musculus (Mouse).